Here is a 434-residue protein sequence, read N- to C-terminus: Putative magnesium transporter MRS2-D (434 aa).

Disordered stretches follow at residues 126–171 (AASP…DGEA) and 279–311 (EASE…AGGG). Positions 279 to 291 (EASELEDHSSRDE) are enriched in basic and acidic residues. Transmembrane regions (helical) follow at residues 367–387 (GILL…TGVF) and 405–425 (FPCA…AALL).

It belongs to the CorA metal ion transporter (MIT) (TC 1.A.35.5) family.

It is found in the membrane. In terms of biological role, putative magnesium transporter. The chain is Putative magnesium transporter MRS2-D (MRS2-D) from Oryza sativa subsp. japonica (Rice).